A 179-amino-acid polypeptide reads, in one-letter code: 3-hydroxyanthranilate 3,4-dioxygenase (179 aa).

An O2-binding site is contributed by R47. 3 residues coordinate Fe cation: H51, E57, and H96. Position 57 (E57) interacts with substrate. Residues R100 and E110 each contribute to the substrate site. Residues C125, C128, C162, and C165 each contribute to the Fe cation site.

This sequence belongs to the 3-HAO family. The cofactor is Fe(2+).

The catalysed reaction is 3-hydroxyanthranilate + O2 = (2Z,4Z)-2-amino-3-carboxymuconate 6-semialdehyde. Its pathway is cofactor biosynthesis; NAD(+) biosynthesis; quinolinate from L-kynurenine: step 3/3. Functionally, catalyzes the oxidative ring opening of 3-hydroxyanthranilate to 2-amino-3-carboxymuconate semialdehyde, which spontaneously cyclizes to quinolinate. The sequence is that of 3-hydroxyanthranilate 3,4-dioxygenase from Bacillus cereus (strain ATCC 10987 / NRS 248).